Consider the following 749-residue polypeptide: Serine/threonine-protein phosphatase 4 regulatory subunit 3 (749 aa).

As to quaternary structure, regulatory subunit 3 (R3) of the histone H2A phosphatase complex (HTP-C) consisting of PPH3, PSY2 and PSY4.

Its subcellular location is the nucleus. In terms of biological role, core regulatory subunit of the histone H2A phosphatase complex, which dephosphorylates H2AS128ph (gamma-H2A) that has been displaced from sites of DNA lesions in the double-stranded DNA break repair process. Dephosphorylation is necessary for efficient recovery from the DNA damage checkpoint. The protein is Serine/threonine-protein phosphatase 4 regulatory subunit 3 (PSY2) of Kluyveromyces lactis (strain ATCC 8585 / CBS 2359 / DSM 70799 / NBRC 1267 / NRRL Y-1140 / WM37) (Yeast).